Reading from the N-terminus, the 152-residue chain is Ribosome maturation factor RimP (152 aa).

This sequence belongs to the RimP family.

Its subcellular location is the cytoplasm. Functionally, required for maturation of 30S ribosomal subunits. This chain is Ribosome maturation factor RimP, found in Burkholderia cenocepacia (strain ATCC BAA-245 / DSM 16553 / LMG 16656 / NCTC 13227 / J2315 / CF5610) (Burkholderia cepacia (strain J2315)).